Reading from the N-terminus, the 351-residue chain is MKALAKLKKQPGIWIINDAPIPEYGYNDVLIKIKKTAICGTDLHIYNWDKWSQNTIPVPMITGHEFAGEVVAKGDGVTSVDIGDRVSGEGHLVCGQCRNCRAGKRHLCRKTIGIGVNVQGAFAEYLVMPAVNVFKIPDSISDDIASTFDPMGNAIHTALSFNLTGEDVLITGAGPIGLMAVKIARFCGARRIVITDINEYRLQMARDFGATVALNVAPFKNQDELVKQMRKVMSDIGMTEGFDVGLEMSGINSAISMMLDVMNHGGKLSLLGISAGDISVDWGAILFKGLTLKGIYGREMFETWYLMTSMLQAGMDMNPIITHRLHIDEFQKGFEIMKSGQCGKVILDWSS.

Cys39 is a Zn(2+) binding site. Residues Thr41 and His44 each act as charge relay system in the active site. 6 residues coordinate Zn(2+): His64, Glu65, Cys94, Cys97, Cys100, and Cys108. NAD(+) contacts are provided by residues Ile176, Asp196, Arg201, 271–273, and 295–296; these read LGI and IY.

The protein belongs to the zinc-containing alcohol dehydrogenase family. Homotetramer. It depends on Zn(2+) as a cofactor.

It is found in the cytoplasm. It catalyses the reaction L-threonine + NAD(+) = (2S)-2-amino-3-oxobutanoate + NADH + H(+). It participates in amino-acid degradation; L-threonine degradation via oxydo-reductase pathway; glycine from L-threonine: step 1/2. Functionally, catalyzes the NAD(+)-dependent oxidation of L-threonine to 2-amino-3-ketobutyrate. This Francisella tularensis subsp. tularensis (strain SCHU S4 / Schu 4) protein is L-threonine 3-dehydrogenase.